Consider the following 407-residue polypeptide: Na(+)-translocating NADH-quinone reductase subunit F (407 aa).

The chain crosses the membrane as a helical span at residues 3–23 (ITLGIAMFTVIVLALAVLILF). The 2Fe-2S ferredoxin-type domain occupies 32-126 (GDITIEINDD…SMKIELPEEV (95 aa)). [2Fe-2S] cluster contacts are provided by Cys69, Cys75, Cys78, and Cys110. Residues 129-269 (VKKWECTVIS…SGPFGEFFAK (141 aa)) enclose the FAD-binding FR-type domain.

The protein belongs to the NqrF family. As to quaternary structure, composed of six subunits; NqrA, NqrB, NqrC, NqrD, NqrE and NqrF. [2Fe-2S] cluster is required as a cofactor. The cofactor is FAD.

It localises to the cell inner membrane. The catalysed reaction is a ubiquinone + n Na(+)(in) + NADH + H(+) = a ubiquinol + n Na(+)(out) + NAD(+). NQR complex catalyzes the reduction of ubiquinone-1 to ubiquinol by two successive reactions, coupled with the transport of Na(+) ions from the cytoplasm to the periplasm. The first step is catalyzed by NqrF, which accepts electrons from NADH and reduces ubiquinone-1 to ubisemiquinone by a one-electron transfer pathway. In Histophilus somni (strain 129Pt) (Haemophilus somnus), this protein is Na(+)-translocating NADH-quinone reductase subunit F.